The sequence spans 179 residues: SCAN domain-containing protein 1 (179 aa).

The segment at 1–107 (MAATEPILAT…AGSRLGPETF (107 aa)) is disordered. Low complexity predominate over residues 52–80 (SPNAAVPEAIPTPRAAASAALELPLGPAP). The SCAN box domain occupies 108–166 (RQRFRQFRYQDAAGPREAFRQLRELSRQWLRPDIRTKEQIVEMLVQEQLLAILPEAARA).

In terms of assembly, interacts with ZNF202.

The protein localises to the nucleus. In terms of biological role, may regulate transcriptional activity. This is SCAN domain-containing protein 1 (SCAND1) from Pan paniscus (Pygmy chimpanzee).